A 141-amino-acid polypeptide reads, in one-letter code: Lutropin subunit beta (141 aa).

A signal peptide spans 1 to 20 (MEMLQGLLLLMLLSMGGTWA). 6 disulfide bridges follow: Cys-29-Cys-77, Cys-43-Cys-92, Cys-46-Cys-130, Cys-54-Cys-108, Cys-58-Cys-110, and Cys-113-Cys-120. Asn-33 and Asn-50 each carry an N-linked (GlcNAc...) asparagine glycan.

Belongs to the glycoprotein hormones subunit beta family. In terms of assembly, heterodimer of a common alpha chain and a unique beta chain which confers biological specificity to thyrotropin, lutropin, follitropin and gonadotropin.

Its subcellular location is the secreted. Its function is as follows. Promotes spermatogenesis and ovulation by stimulating the testes and ovaries to synthesize steroids. This chain is Lutropin subunit beta (LHB), found in Pongo pygmaeus (Bornean orangutan).